The primary structure comprises 37 residues: Cytochrome b6-f complex subunit 5 (37 aa).

The chain crosses the membrane as a helical span at residues L5–A25.

It belongs to the PetG family. In terms of assembly, the 4 large subunits of the cytochrome b6-f complex are cytochrome b6, subunit IV (17 kDa polypeptide, PetD), cytochrome f and the Rieske protein, while the 4 small subunits are PetG, PetL, PetM and PetN. The complex functions as a dimer.

The protein localises to the plastid. The protein resides in the chloroplast thylakoid membrane. Component of the cytochrome b6-f complex, which mediates electron transfer between photosystem II (PSII) and photosystem I (PSI), cyclic electron flow around PSI, and state transitions. PetG is required for either the stability or assembly of the cytochrome b6-f complex. This is Cytochrome b6-f complex subunit 5 from Psilotum nudum (Whisk fern).